A 100-amino-acid polypeptide reads, in one-letter code: Proline-rich protein 15-like protein (100 aa).

Residues 29-51 form a disordered region; it reads YAQTEGGAEPPGPDAGDPHSDFN.

It belongs to the PRR15 family.

In Mus musculus (Mouse), this protein is Proline-rich protein 15-like protein (Prr15l).